A 382-amino-acid polypeptide reads, in one-letter code: Galactokinase (382 aa).

34-37 (EHTD) provides a ligand contact to substrate. 124 to 130 (GAGLSSS) contacts ATP. Mg(2+) contacts are provided by serine 130 and glutamate 162. Residue aspartate 174 is the Proton acceptor of the active site. Residue tyrosine 223 coordinates substrate.

It belongs to the GHMP kinase family. GalK subfamily.

It is found in the cytoplasm. The enzyme catalyses alpha-D-galactose + ATP = alpha-D-galactose 1-phosphate + ADP + H(+). It participates in carbohydrate metabolism; galactose metabolism. In terms of biological role, catalyzes the transfer of the gamma-phosphate of ATP to D-galactose to form alpha-D-galactose-1-phosphate (Gal-1-P). The polypeptide is Galactokinase (Shigella boydii serotype 18 (strain CDC 3083-94 / BS512)).